A 212-amino-acid polypeptide reads, in one-letter code: Thiamine-phosphate synthase (212 aa).

Residues 33–37 (QMRFK) and N65 contribute to the 4-amino-2-methyl-5-(diphosphooxymethyl)pyrimidine site. Mg(2+)-binding residues include D66 and D85. T104 contacts 4-amino-2-methyl-5-(diphosphooxymethyl)pyrimidine. 2-[(2R,5Z)-2-carboxy-4-methylthiazol-5(2H)-ylidene]ethyl phosphate is bound at residue 130 to 132 (TNT). K133 serves as a coordination point for 4-amino-2-methyl-5-(diphosphooxymethyl)pyrimidine. 2-[(2R,5Z)-2-carboxy-4-methylthiazol-5(2H)-ylidene]ethyl phosphate is bound at residue G166.

The protein belongs to the thiamine-phosphate synthase family. Mg(2+) serves as cofactor.

The catalysed reaction is 2-[(2R,5Z)-2-carboxy-4-methylthiazol-5(2H)-ylidene]ethyl phosphate + 4-amino-2-methyl-5-(diphosphooxymethyl)pyrimidine + 2 H(+) = thiamine phosphate + CO2 + diphosphate. The enzyme catalyses 2-(2-carboxy-4-methylthiazol-5-yl)ethyl phosphate + 4-amino-2-methyl-5-(diphosphooxymethyl)pyrimidine + 2 H(+) = thiamine phosphate + CO2 + diphosphate. It catalyses the reaction 4-methyl-5-(2-phosphooxyethyl)-thiazole + 4-amino-2-methyl-5-(diphosphooxymethyl)pyrimidine + H(+) = thiamine phosphate + diphosphate. It participates in cofactor biosynthesis; thiamine diphosphate biosynthesis; thiamine phosphate from 4-amino-2-methyl-5-diphosphomethylpyrimidine and 4-methyl-5-(2-phosphoethyl)-thiazole: step 1/1. Condenses 4-methyl-5-(beta-hydroxyethyl)thiazole monophosphate (THZ-P) and 2-methyl-4-amino-5-hydroxymethyl pyrimidine pyrophosphate (HMP-PP) to form thiamine monophosphate (TMP). This Flavobacterium johnsoniae (strain ATCC 17061 / DSM 2064 / JCM 8514 / BCRC 14874 / CCUG 350202 / NBRC 14942 / NCIMB 11054 / UW101) (Cytophaga johnsonae) protein is Thiamine-phosphate synthase.